A 970-amino-acid chain; its full sequence is uncharacterized protein (970 aa).

A disordered region spans residues 942–970; that stretch reads QLSFEEDGWTESEPRPVRREAHVRAKERH. Basic and acidic residues predominate over residues 953 to 970; it reads SEPRPVRREAHVRAKERH.

This is an uncharacterized protein from Frog virus 3 (isolate Goorha) (FV-3).